The sequence spans 391 residues: ATP phosphoribosyltransferase regulatory subunit (391 aa).

This sequence belongs to the class-II aminoacyl-tRNA synthetase family. HisZ subfamily. Heteromultimer composed of HisG and HisZ subunits.

It localises to the cytoplasm. It functions in the pathway amino-acid biosynthesis; L-histidine biosynthesis; L-histidine from 5-phospho-alpha-D-ribose 1-diphosphate: step 1/9. Its function is as follows. Required for the first step of histidine biosynthesis. May allow the feedback regulation of ATP phosphoribosyltransferase activity by histidine. This is ATP phosphoribosyltransferase regulatory subunit from Nitrosomonas europaea (strain ATCC 19718 / CIP 103999 / KCTC 2705 / NBRC 14298).